A 217-amino-acid polypeptide reads, in one-letter code: Probable transaldolase (217 aa).

Lys-83 functions as the Schiff-base intermediate with substrate in the catalytic mechanism.

This sequence belongs to the transaldolase family. Type 3B subfamily.

Its subcellular location is the cytoplasm. It carries out the reaction D-sedoheptulose 7-phosphate + D-glyceraldehyde 3-phosphate = D-erythrose 4-phosphate + beta-D-fructose 6-phosphate. It functions in the pathway carbohydrate degradation; pentose phosphate pathway; D-glyceraldehyde 3-phosphate and beta-D-fructose 6-phosphate from D-ribose 5-phosphate and D-xylulose 5-phosphate (non-oxidative stage): step 2/3. In terms of biological role, transaldolase is important for the balance of metabolites in the pentose-phosphate pathway. The protein is Probable transaldolase of Paracoccus denitrificans (strain Pd 1222).